Reading from the N-terminus, the 859-residue chain is DNA mismatch repair protein MutS (859 aa).

Residue 618–625 (GPNMGGKS) coordinates ATP. The segment at 803–829 (RDHDVQQNTEQQGTQQNMSFVPSAPSP) is disordered. Residues 808 to 819 (QQNTEQQGTQQN) are compositionally biased toward low complexity.

Belongs to the DNA mismatch repair MutS family.

In terms of biological role, this protein is involved in the repair of mismatches in DNA. It is possible that it carries out the mismatch recognition step. This protein has a weak ATPase activity. This Shewanella pealeana (strain ATCC 700345 / ANG-SQ1) protein is DNA mismatch repair protein MutS.